The chain runs to 549 residues: MMYIVELVRESLKKKTFNKKIFLELCKKLDIPIPQKLNKHNFPPLFYELIDKLKSLNIIEFCEITMDLHTITEKQKEILLNMVEHPINILIIGKGGGKDFMVSLLFNYMMFRACVEDYYEKFTRIDFVNVAPNDHLAKNVFFKEFKAWFLKCKVWQMIGIDKKKRQKAPICVLETKAEIGDKITMHSGHSRATSFEGMNALCVVADEISDPDFKNAEQLFEQGLSSAKSRFKDKARVVAITWTRFPTPNPRDDVGYRLYLDYKAVDEAYTFKGKTWEVNTRVSKEDFKAQYQKNPILARCMYECEPPELNAYFISLEALEARHKVEMGLFTWRAIYENNLIRLEFKQLQSTDKTIYCHTDLAINRDKGVIAISYFDKGKVIISDIIVLTPTLGHKIDYLSLEKFYNHLQNHFSVKFTFDRFQSEYFIQKFKGERLSKHVKLWTTFQELVEGTKEYYDATGVKRKKAKIEIRCNEDIWQKLRTQILQHQIDGDKVIYFGEGSPDLADAVVSSAYNCITHNVNAIDEEDYSYRQVFDDEEEFEEFEFGSFF.

This is an uncharacterized protein from Methanocaldococcus jannaschii (strain ATCC 43067 / DSM 2661 / JAL-1 / JCM 10045 / NBRC 100440) (Methanococcus jannaschii).